A 61-amino-acid polypeptide reads, in one-letter code: Statherin (61 aa).

A signal peptide spans 1 to 19 (MXFLXFXLXLLXMXXMXXX). The hydroxyapatite-binding; inhibits crystal growth stretch occupies residues 20–25 (DSSEEK). Phosphoserine occurs at positions 21 and 22. The tract at residues 37–61 (RYGPYQPFAPQPLYPQPYQPYQPQY) is disordered. The segment at 37–61 (RYGPYQPFAPQPLYPQPYQPYQPQY) is hydrophobic; inhibits precipitation of calcium phosphate salts. Over residues 43–61 (PFAPQPLYPQPYQPYQPQY) the composition is skewed to pro residues.

Belongs to the histatin/statherin family. As to expression, secreted by parotid and submandibular glands.

Its subcellular location is the secreted. Its function is as follows. Salivary protein that stabilizes saliva supersaturated with calcium salts by inhibiting the precipitation of calcium phosphate salts. It also modulates hydroxyapatite crystal formation on the tooth surface. The sequence is that of Statherin (STATH) from Macaca fascicularis (Crab-eating macaque).